The primary structure comprises 1910 residues: MVRVRADLQCFNPRDYQVELLDKATKKNTIVQLGTGSGKTFIAVLLLKEYGVQLFAPLDQGGKRAFFVVEKVNLVEQQAIHIEVHTSFKVGQVHGQTSSGLWDSKEQCDQFMKRHHVVVITAQCLLDLIRHAYLKIEDMCVLIFDECHHALGSQHPYRSIMVDYKLLKKDKPVPRVLGLTASLIKAKVAPEKLMEQLKKLESAMDSVIETASDLVSLSKYGAKPYEVVIICKDFEIGCLGIPNFDTVIEIFDETVAFVNTTTEFHPDLDLDPRRPIKDSLKTTRAVFRQLGPWAAWRTAQVWEKELGKIIKSQVLPDKTLRFLNMAKTSMITIKRLLEPEMKKIKSIEALRPYVPQRVIRLFEILETFNPEFQKERMKLEKAEHLSAIIFVDQRYIAYSLLLMMRHIKSWEPKFKFVNPDYVVGASGRNLASSDSQGLHKRQTEVLRRFHRNEINCLIATSVLEEGVDVKQCNLVIKFDRPLDMRSYVQSKGRARRAGSRYVITVEEKDTAACDSDLKDFQQIEKILLSRHRTVNNPIEDDSDRFEEFDVDSQMEPYVVEKTGATLKMSTAIALINRYCSKLPSDIFTRLVPHNQIIPIEENGVTKYCAELLLPINSPIKHAIVLKNPMPNKKTAQMAVALEACRQLHLEGELDDNLLPKGRESIAKLLEHIDEEPDEYAPGIAAKVGSSKRKQLYDKKIARALNESFVEADKECFIYAFELERFREAELTLNPKRRKFEDPFNYEYCFGFLSAKEIPKIPPFPVFLRQGNMKVRLIVAPKKTTVTAAQLQEIQLFHNYLFTQVLQMCKTGNLEFDGTSNAPLNTLIVPLNKRKDDMSYTINMKYVSEVVANMENMPRIPKDEVRRQYKFNAEDYKDAIVMPWYRNLEQPVFYYVAEILPEWRPSSKFPDTHFETFNEYFIKKYKLEIYDQNQSLLDVDFTSTRLNLLQPRIQNQPRRSRTVSNSSTSNIPQASASDSKESNTSVPHSSQRQILVPELMDIHPISATLWNVIAALPSIFYRVNQLLLTDELRETILVKAFGKEKTKLDDNVEWNSLAYATEYEEKQTIIVKKIQQLRDLNQKSIEDQERETRENDKIDDGEELFNIGVWDPEEAVRIGVEISSRDDRMDGEDQDTVGLTQGLHDGNISDEDDELPFVMHDYTARLTSNRNGIGAWSGSESIVPSGWGDWDGPEPDNSPMPFQILGGPGGLNVQALMADVGRVFDPSTASSSLSQTVQESTVSPPKQLTKEEEQFKKLQNDLLKQAKERLEALEMSEDMEKPRRLEDTVNLEDYGDDQENQEDENTPTNFPKTIDEEIEELSIGARKKQEIDDNAAKTDVLERENCEVLPVAINEKSRSFSFEKESKAINGRLIRQRSEEYVSHIDSDIGLGVSPCLLLTALTTSNAADGMSLERFETIGDSFLKFATTDYLYHTLLDQHEGKLSFARSKEVSNCNLYRLGKKLGIPQLIVANKFDAHDSWLPPCYIPTCDFKAPNTDDAEEKDNEIERILDGQVIEEKPENKTGWDIGGDVSKSTTDGIETITFPKQARVGNDDISPLPYNLLTQQHISDKSIADAVEALIGVHLLTLGPNPTLKVMNWMGLKVIQKDQKSDVPSPLLRFIDTPTNPNASLNFLNNLWQQFQFTQLEEKIGYRFKERAYLVQAFTHASYINNRVTGCYQRLEFLGDAVLDYMITRYLFEDSRQYSPGVLTDLRSALVNNTIFASLAVKFEFQKHFIAMCPGLYHMIEKFVKLCSERNFDTNFNAEMYMVTTEEEIDEGQEEDIEVPKAMGDIFESVAGAIYLDSGRNLDTTWQVIFHMMRGTIELCCANPPRSPIRELMEFEQSKVRFSKMERILESGKVRVTVEVVNNMRFTGMGRNYRIAKATAAKRALKYLHQIEQQRRQSPSLTTV.

One can recognise a Helicase ATP-binding domain in the interval 20–201; the sequence is LLDKATKKNT…KLMEQLKKLE (182 aa). Residue 33 to 40 coordinates ATP; sequence LGTGSGKT. The DEAH box signature appears at 145-148; the sequence is DECH. The Helicase C-terminal domain maps to 371–542; the sequence is EFQKERMKLE…TVNNPIEDDS (172 aa). Positions 571-667 constitute a Dicer dsRNA-binding fold domain; that stretch reads AIALINRYCS…LPKGRESIAK (97 aa). One can recognise a PAZ domain in the interval 845–1003; the sequence is YVSEVVANME…LVPELMDIHP (159 aa). Disordered stretches follow at residues 951 to 988, 1227 to 1248, and 1272 to 1309; these read RIQNQPRRSRTVSNSSTSNIPQASASDSKESNTSVPHS, TASSSLSQTVQESTVSPPKQLT, and LEMSEDMEKPRRLEDTVNLEDYGDDQENQEDENTPTNF. 2 stretches are compositionally biased toward polar residues: residues 970 to 988 and 1227 to 1245; these read IPQASASDSKESNTSVPHS and TASSSLSQTVQESTVSPPK. The stretch at 1245-1280 forms a coiled coil; it reads KQLTKEEEQFKKLQNDLLKQAKERLEALEMSEDMEK. Over residues 1272–1286 the composition is skewed to basic and acidic residues; that stretch reads LEMSEDMEKPRRLED. The span at 1288-1304 shows a compositional bias: acidic residues; sequence VNLEDYGDDQENQEDEN. 2 consecutive RNase III domains span residues 1381–1589 and 1643–1805; these read VSHI…LTLG and FTQL…LDSG. Glu-1682, Asp-1791, and Glu-1794 together coordinate Mg(2+). In terms of domain architecture, DRBM spans 1833–1896; that stretch reads SPIRELMEFE…AKRALKYLHQ (64 aa).

Belongs to the helicase family. Dicer subfamily. As to quaternary structure, component of the ERI/DICER complex at least composed of dcr-1, rrf-3 and eri-1. Interacts with pir-1. Mg(2+) serves as cofactor. Requires Mn(2+) as cofactor.

Its function is as follows. Component of the ERI/DICER complex which is involved in processing amplified double-stranded RNA (dsRNA) intermediates during small-RNA-mediated gene-silencing or RNA interference (RNAi). Involved in cleaving dsRNA in the RNAi pathway. It produces 21 to 23 bp dsRNAs (siRNAs) which target the selective destruction of homologous RNAs. Seems to process the precursor of the small temporal RNA let-7 which is involved in developmental timing. Required for avoidance behavior induced by small RNAs derived from pathogenic bacteria such as P.aeruginosa. Involved in innate immunity through its role in small RNA processing. Functionally, tDCR-1 acts as a deoxyribonuclease (DNase) initiating DNA fragmentation during apoptosis, upstream of nucleases cps-6, crn-2 and nuc-1. The sequence is that of Endoribonuclease dcr-1 from Caenorhabditis elegans.